The chain runs to 361 residues: tRNA-specific 2-thiouridylase MnmA (361 aa).

ATP is bound by residues 8–15 (AMSGGVDS) and Met35. The segment at 95–97 (NPD) is interaction with target base in tRNA. Cys100 acts as the Nucleophile in catalysis. Cys100 and Cys196 form a disulfide bridge. Gly124 is a binding site for ATP. The segment at 146–148 (KDQ) is interaction with tRNA. Cys196 serves as the catalytic Cysteine persulfide intermediate. Residues 303 to 304 (RY) form an interaction with tRNA region.

This sequence belongs to the MnmA/TRMU family.

The protein localises to the cytoplasm. The enzyme catalyses S-sulfanyl-L-cysteinyl-[protein] + uridine(34) in tRNA + AH2 + ATP = 2-thiouridine(34) in tRNA + L-cysteinyl-[protein] + A + AMP + diphosphate + H(+). Functionally, catalyzes the 2-thiolation of uridine at the wobble position (U34) of tRNA, leading to the formation of s(2)U34. The polypeptide is tRNA-specific 2-thiouridylase MnmA (Chlamydia felis (strain Fe/C-56) (Chlamydophila felis)).